Consider the following 211-residue polypeptide: Probable septum site-determining protein MinC (211 aa).

It belongs to the MinC family. In terms of assembly, interacts with MinD and FtsZ.

Functionally, cell division inhibitor that blocks the formation of polar Z ring septums. Rapidly oscillates between the poles of the cell to destabilize FtsZ filaments that have formed before they mature into polar Z rings. Prevents FtsZ polymerization. This Clostridium acetobutylicum (strain ATCC 824 / DSM 792 / JCM 1419 / IAM 19013 / LMG 5710 / NBRC 13948 / NRRL B-527 / VKM B-1787 / 2291 / W) protein is Probable septum site-determining protein MinC.